The following is an 878-amino-acid chain: Phosphoenolpyruvate carboxylase (878 aa).

Active-site residues include histidine 140 and lysine 545.

Belongs to the PEPCase type 1 family. Requires Mg(2+) as cofactor.

The enzyme catalyses oxaloacetate + phosphate = phosphoenolpyruvate + hydrogencarbonate. In terms of biological role, forms oxaloacetate, a four-carbon dicarboxylic acid source for the tricarboxylic acid cycle. This chain is Phosphoenolpyruvate carboxylase, found in Pseudomonas syringae pv. syringae (strain B728a).